A 100-amino-acid chain; its full sequence is Urease subunit gamma (100 aa).

Belongs to the urease gamma subunit family. In terms of assembly, heterotrimer of UreA (gamma), UreB (beta) and UreC (alpha) subunits. Three heterotrimers associate to form the active enzyme.

It is found in the cytoplasm. The catalysed reaction is urea + 2 H2O + H(+) = hydrogencarbonate + 2 NH4(+). It participates in nitrogen metabolism; urea degradation; CO(2) and NH(3) from urea (urease route): step 1/1. The polypeptide is Urease subunit gamma (Stutzerimonas stutzeri (strain A1501) (Pseudomonas stutzeri)).